We begin with the raw amino-acid sequence, 76 residues long: Kappa-actitoxin-Avd4d (76 aa).

Positions 1-19 (MNKALFLCLVVLCAAVVFA) are cleaved as a signal peptide. Positions 20 to 31 (AEDLQKAKHVPF) are excised as a propeptide. 3 disulfides stabilise this stretch: Cys37-Cys72, Cys39-Cys65, and Cys55-Cys73.

Belongs to the sea anemone type 3 (BDS) potassium channel toxin family. Moderately expressed in the ectodermal tissue from the distal and proximal tentacles, body wall, and oral disk.

It localises to the secreted. The protein resides in the nematocyst. In terms of biological role, blocks Kv3 voltage-gated potassium channels. Reduces blood pressure. In Anemonia viridis (Snakelocks anemone), this protein is Kappa-actitoxin-Avd4d.